The sequence spans 277 residues: Venom serine protease (277 aa).

Positions 1 to 19 (MNCGKIILLFITIIGVAKS) are cleaved as a signal peptide. Positions 34-269 (IVNGVETEIN…FMEFIHNATI (236 aa)) constitute a Peptidase S1 domain. Residues C60 and C76 are joined by a disulfide bond. The active-site Charge relay system is H75. N84 and N104 each carry an N-linked (GlcNAc...) asparagine glycan. The Charge relay system role is filled by D126. N155 and N158 each carry an N-linked (GlcNAc...) asparagine glycan. 2 disulfides stabilise this stretch: C192/C207 and C216/C246. Residue N218 is glycosylated (N-linked (GlcNAc...) asparagine). S220 functions as the Charge relay system in the catalytic mechanism. An N-linked (GlcNAc...) asparagine glycan is attached at N266.

The protein belongs to the peptidase S1 family. As to expression, expressed by the venom duct.

The protein localises to the secreted. The protein is Venom serine protease of Polistes dominula (European paper wasp).